The primary structure comprises 543 residues: Carboxypeptidase Y homolog A (543 aa).

The signal sequence occupies residues 1-17; the sequence is MKFLTTGLLATAALAAA. The propeptide occupies 18–124; that stretch reads QEQQVLQAED…KLHNYDLRVK (107 aa). Cystine bridges form between cysteine 179-cysteine 419, cysteine 313-cysteine 327, cysteine 337-cysteine 360, cysteine 344-cysteine 353, and cysteine 382-cysteine 389. N-linked (GlcNAc...) asparagine glycosylation occurs at asparagine 210. Serine 266 is a catalytic residue. Aspartate 458 is an active-site residue. An N-linked (GlcNAc...) asparagine glycan is attached at asparagine 509. Residue histidine 520 is part of the active site.

The protein belongs to the peptidase S10 family.

It localises to the vacuole. The enzyme catalyses Release of a C-terminal amino acid with broad specificity.. In terms of biological role, vacuolar carboxypeptidase involved in degradation of small peptides. Digests preferentially peptides containing an aliphatic or hydrophobic residue in P1' position, as well as methionine, leucine or phenylalanine in P1 position of ester substrate. The chain is Carboxypeptidase Y homolog A (CPYA) from Trichophyton tonsurans (Scalp ringworm fungus).